Consider the following 483-residue polypeptide: Acyl-coenzyme A thioesterase 2, mitochondrial (483 aa).

Residue lysine 104 is modified to N6-acetyllysine. Active-site charge relay system residues include serine 294, aspartate 388, and histidine 422. Lysine 470 is subject to N6-succinyllysine. A Microbody targeting signal motif is present at residues serine 481–valine 483.

This sequence belongs to the C/M/P thioester hydrolase family. As to quaternary structure, monomer. As to expression, strongest expression in heart, liver, muscle and kidney. Weak in placenta and pancreas.

It localises to the mitochondrion. It carries out the reaction hexadecanoyl-CoA + H2O = hexadecanoate + CoA + H(+). The enzyme catalyses tetradecanoyl-CoA + H2O = tetradecanoate + CoA + H(+). The catalysed reaction is octadecanoyl-CoA + H2O = octadecanoate + CoA + H(+). It catalyses the reaction eicosanoyl-CoA + H2O = eicosanoate + CoA + H(+). It carries out the reaction decanoyl-CoA + H2O = decanoate + CoA + H(+). The enzyme catalyses dodecanoyl-CoA + H2O = dodecanoate + CoA + H(+). The catalysed reaction is (9Z)-octadecenoyl-CoA + H2O = (9Z)-octadecenoate + CoA + H(+). It catalyses the reaction (9Z)-hexadecenoyl-CoA + H2O = (9Z)-hexadecenoate + CoA + H(+). It carries out the reaction (9E)-octadecenoyl-CoA + H2O = (9E)-octadecenoate + CoA + H(+). The enzyme catalyses (9Z,12Z)-octadecadienoyl-CoA + H2O = (9Z,12Z)-octadecadienoate + CoA + H(+). The protein operates within lipid metabolism; fatty acid metabolism. Catalyzes the hydrolysis of acyl-CoAs into free fatty acids and coenzyme A (CoASH), regulating their respective intracellular levels. Displays higher activity toward long chain acyl CoAs (C14-C20). The enzyme is involved in enhancing the hepatic fatty acid oxidation in mitochondria. The protein is Acyl-coenzyme A thioesterase 2, mitochondrial (ACOT2) of Homo sapiens (Human).